Consider the following 128-residue polypeptide: Large ribosomal subunit protein uL22 (128 aa).

Belongs to the universal ribosomal protein uL22 family. Part of the 50S ribosomal subunit.

Its function is as follows. This protein binds specifically to 23S rRNA; its binding is stimulated by other ribosomal proteins, e.g. L4, L17, and L20. It is important during the early stages of 50S assembly. It makes multiple contacts with different domains of the 23S rRNA in the assembled 50S subunit and ribosome. Functionally, the globular domain of the protein is located near the polypeptide exit tunnel on the outside of the subunit, while an extended beta-hairpin is found that lines the wall of the exit tunnel in the center of the 70S ribosome. This chain is Large ribosomal subunit protein uL22, found in Prochlorococcus marinus (strain MIT 9312).